The primary structure comprises 772 residues: Nudix hydrolase 3 (772 aa).

Positions 1–14 (MAEEHFDVLTKSGE) are enriched in basic and acidic residues. The segment at 1–25 (MAEEHFDVLTKSGEKTGVSKPRGEV) is disordered. One can recognise a Nudix hydrolase domain in the interval 30 to 172 (DYHRAVHVWI…DPAYVPYDVN (143 aa)). The short motif at 69–90 (GHISAGDTSLLSAQRELEEELG) is the Nudix box element. Residues Glu84 and Glu88 each coordinate Mg(2+).

It belongs to the Nudix hydrolase family. It depends on Mg(2+) as a cofactor. Requires Mn(2+) as cofactor. In terms of tissue distribution, expressed in roots, stems and, at lower level, leaves.

In terms of biological role, probably mediates the hydrolysis of some nucleoside diphosphate derivatives. The polypeptide is Nudix hydrolase 3 (NUDT3) (Arabidopsis thaliana (Mouse-ear cress)).